The following is a 444-amino-acid chain: Enolase (444 aa).

Ser-40 is a binding site for Mg(2+). Ser-40 is subject to Phosphoserine. Positions 102-106 (EWGWS) match the Pentapeptide insert motif. Lys-131 bears the N6-acetyllysine mark. Lys-136 participates in a covalent cross-link: Glycyl lysine isopeptide (Lys-Gly) (interchain with G-Cter in ubiquitin). At Tyr-137 the chain carries Phosphotyrosine. Substrate is bound by residues His-164 and Glu-173. The active-site Proton donor is the Glu-216. Asp-251 is a binding site for Mg(2+). Positions 275 to 280 (DKSLVK) match the DKSLVK motif motif. Residues Glu-302 and Asp-329 each coordinate Mg(2+). Substrate-binding residues include Glu-302 and Asp-329. The residue at position 337 (Thr-337) is a Phosphothreonine. Catalysis depends on Lys-354, which acts as the Proton acceptor. At Lys-373 the chain carries N6-acetyllysine. Substrate contacts are provided by residues 381-384 (SHRS) and Lys-405.

It belongs to the enolase family. In terms of assembly, homodimer. Forms a complex at least composed of DegP, ENO and HSP70. Interacts with G-actin. Interacts (via the DKSLVK motif) with mammalian host PLG/plasminogen (present in the mosquito blood meal); the interaction occurs at the ookinete cell surface and is required for ookinete invasion of the mosquito midgut. Interacts with A.gambiae EBP; depending on the Plasmodium species, the interaction is either involved in ookinete invasion of the mosquito midgut (P.berghei) or is dispensable (P.falciparum). It depends on Mg(2+) as a cofactor.

The protein resides in the cytoplasm. Its subcellular location is the nucleus. The protein localises to the cytoskeleton. It is found in the cell surface. It localises to the cell membrane. The protein resides in the vacuole. The enzyme catalyses (2R)-2-phosphoglycerate = phosphoenolpyruvate + H2O. The protein operates within carbohydrate degradation; glycolysis; pyruvate from D-glyceraldehyde 3-phosphate: step 4/5. Its function is as follows. Glycolytic enzyme that catalyzes the conversion of 2-phosphoglycerate to phosphoenolpyruvate. In addition to glycolysis, involved in various processes such as parasite development and invasion. Plays an essential role during ookinete invasion of the mosquito vector midgut by mediating the interaction of the ookinete with the midgut epithelium and, further, by binding to mammalian host plasminogen in the blood meal, whose conversion to active plasmin promotes the invasion process. The protein is Enolase of Plasmodium yoelii yoelii.